The primary structure comprises 375 residues: UDP-N-acetylglucosamine--N-acetylmuramyl-(pentapeptide) pyrophosphoryl-undecaprenol N-acetylglucosamine transferase (375 aa).

UDP-N-acetyl-alpha-D-glucosamine-binding positions include 13–15, asparagine 124, arginine 165, serine 193, and glutamine 294; that span reads TGG.

The protein belongs to the glycosyltransferase 28 family. MurG subfamily.

It is found in the cell inner membrane. The catalysed reaction is di-trans,octa-cis-undecaprenyl diphospho-N-acetyl-alpha-D-muramoyl-L-alanyl-D-glutamyl-meso-2,6-diaminopimeloyl-D-alanyl-D-alanine + UDP-N-acetyl-alpha-D-glucosamine = di-trans,octa-cis-undecaprenyl diphospho-[N-acetyl-alpha-D-glucosaminyl-(1-&gt;4)]-N-acetyl-alpha-D-muramoyl-L-alanyl-D-glutamyl-meso-2,6-diaminopimeloyl-D-alanyl-D-alanine + UDP + H(+). It functions in the pathway cell wall biogenesis; peptidoglycan biosynthesis. In terms of biological role, cell wall formation. Catalyzes the transfer of a GlcNAc subunit on undecaprenyl-pyrophosphoryl-MurNAc-pentapeptide (lipid intermediate I) to form undecaprenyl-pyrophosphoryl-MurNAc-(pentapeptide)GlcNAc (lipid intermediate II). This is UDP-N-acetylglucosamine--N-acetylmuramyl-(pentapeptide) pyrophosphoryl-undecaprenol N-acetylglucosamine transferase from Mesorhizobium japonicum (strain LMG 29417 / CECT 9101 / MAFF 303099) (Mesorhizobium loti (strain MAFF 303099)).